The sequence spans 243 residues: Ubiquinone biosynthesis O-methyltransferase (243 aa).

S-adenosyl-L-methionine contacts are provided by R44, G64, D85, and M129.

It belongs to the methyltransferase superfamily. UbiG/COQ3 family.

It catalyses the reaction a 3-demethylubiquinol + S-adenosyl-L-methionine = a ubiquinol + S-adenosyl-L-homocysteine + H(+). It carries out the reaction a 3-(all-trans-polyprenyl)benzene-1,2-diol + S-adenosyl-L-methionine = a 2-methoxy-6-(all-trans-polyprenyl)phenol + S-adenosyl-L-homocysteine + H(+). It participates in cofactor biosynthesis; ubiquinone biosynthesis. Its function is as follows. O-methyltransferase that catalyzes the 2 O-methylation steps in the ubiquinone biosynthetic pathway. The protein is Ubiquinone biosynthesis O-methyltransferase of Cronobacter sakazakii (strain ATCC BAA-894) (Enterobacter sakazakii).